The primary structure comprises 354 residues: Alternative oxidase, mitochondrial (354 aa).

The transit peptide at 1-64 directs the protein to the mitochondrion; it reads MNSMSTTGPI…RFISSTPQSQ (64 aa). Residues 153–173 traverse the membrane as a helical segment; the sequence is FVFLESVAGVPGMVGGMLRHL. The Fe cation site is built by E157, E196, and H199. A helical transmembrane segment spans residues 215 to 235; sequence LMVLGAQGVFFNGFFLSYLIS. E247, E302, and H305 together coordinate Fe cation. The segment at 333–354 is disordered; that stretch reads KPHPGKGIKHLKTTGWEREEVV. A compositionally biased stretch (basic residues) spans 335-344; that stretch reads HPGKGIKHLK.

Belongs to the alternative oxidase family. Fe cation is required as a cofactor.

Its subcellular location is the mitochondrion inner membrane. Catalyzes cyanide-resistant oxygen consumption. May increase respiration when the cytochrome respiratory pathway is restricted, or in response to low temperatures. This is Alternative oxidase, mitochondrial (alxA) from Emericella nidulans (strain FGSC A4 / ATCC 38163 / CBS 112.46 / NRRL 194 / M139) (Aspergillus nidulans).